The primary structure comprises 215 residues: Pyridoxine/pyridoxamine 5'-phosphate oxidase (215 aa).

Residues 9-12 (RKEY) and Lys67 contribute to the substrate site. FMN is bound by residues 62–67 (RIVLLK), 77–78 (YT), Lys84, and Gln106. Residues Tyr124, Arg128, and Ser132 each contribute to the substrate site. FMN contacts are provided by residues 141-142 (QS) and Trp187. 193–195 (RLH) contributes to the substrate binding site. Arg197 lines the FMN pocket.

It belongs to the pyridoxamine 5'-phosphate oxidase family. As to quaternary structure, homodimer. It depends on FMN as a cofactor.

The catalysed reaction is pyridoxamine 5'-phosphate + O2 + H2O = pyridoxal 5'-phosphate + H2O2 + NH4(+). It carries out the reaction pyridoxine 5'-phosphate + O2 = pyridoxal 5'-phosphate + H2O2. The protein operates within cofactor metabolism; pyridoxal 5'-phosphate salvage; pyridoxal 5'-phosphate from pyridoxamine 5'-phosphate: step 1/1. Its pathway is cofactor metabolism; pyridoxal 5'-phosphate salvage; pyridoxal 5'-phosphate from pyridoxine 5'-phosphate: step 1/1. Catalyzes the oxidation of either pyridoxine 5'-phosphate (PNP) or pyridoxamine 5'-phosphate (PMP) into pyridoxal 5'-phosphate (PLP). In Cytophaga hutchinsonii (strain ATCC 33406 / DSM 1761 / CIP 103989 / NBRC 15051 / NCIMB 9469 / D465), this protein is Pyridoxine/pyridoxamine 5'-phosphate oxidase.